Here is a 425-residue protein sequence, read N- to C-terminus: Homogentisate 1,2-dioxygenase (425 aa).

His-283 (proton acceptor) is an active-site residue. Fe cation contacts are provided by His-326 and Glu-332. Homogentisate contacts are provided by Tyr-341 and His-362. A Fe cation-binding site is contributed by His-362.

This sequence belongs to the homogentisate dioxygenase family. In terms of assembly, hexamer; dimer of trimers. It depends on Fe cation as a cofactor.

The catalysed reaction is homogentisate + O2 = 4-maleylacetoacetate + H(+). It participates in amino-acid degradation; L-phenylalanine degradation; acetoacetate and fumarate from L-phenylalanine: step 4/6. Functionally, involved in the catabolism of homogentisate (2,5-dihydroxyphenylacetate or 2,5-OH-PhAc), a central intermediate in the degradation of phenylalanine and tyrosine. Catalyzes the oxidative ring cleavage of the aromatic ring of homogentisate to yield maleylacetoacetate. The sequence is that of Homogentisate 1,2-dioxygenase from Caulobacter vibrioides (strain ATCC 19089 / CIP 103742 / CB 15) (Caulobacter crescentus).